We begin with the raw amino-acid sequence, 563 residues long: Pyruvate decarboxylase isozyme 1 (563 aa).

The residue at position 2 (serine 2) is an N-acetylserine. 3 residues coordinate pyruvate: aspartate 28, histidine 115, and tyrosine 157. Arginine 161 bears the Omega-N-methylarginine mark. A Glycyl lysine isopeptide (Lys-Gly) (interchain with G-Cter in ubiquitin) cross-link involves residue lysine 212. A Phosphoserine modification is found at serine 223. Position 224 (arginine 224) interacts with pyruvate. Lysine 233 is covalently cross-linked (Glycyl lysine isopeptide (Lys-Gly) (interchain with G-Cter in ubiquitin)). Threonine 266 carries the phosphothreonine modification. Residues lysine 269 and lysine 332 each participate in a glycyl lysine isopeptide (Lys-Gly) (interchain with G-Cter in ubiquitin) cross-link. Residues threonine 336 and threonine 353 each carry the phosphothreonine modification. Thiamine diphosphate contacts are provided by residues threonine 390 and glycine 413 to isoleucine 415. Residue aspartate 444 coordinates Mg(2+). Thiamine diphosphate contacts are provided by residues glycine 445–serine 446 and asparagine 471–isoleucine 476. Mg(2+)-binding residues include asparagine 471 and glycine 473. Glutamate 477 lines the pyruvate pocket. Glycyl lysine isopeptide (Lys-Gly) (interchain with G-Cter in ubiquitin) cross-links involve residues lysine 484, lysine 505, and lysine 520. Threonine 522 carries the post-translational modification Phosphothreonine. At serine 526 the chain carries Phosphoserine.

Belongs to the TPP enzyme family. In terms of assembly, homotetramer. Mg(2+) is required as a cofactor. The cofactor is thiamine diphosphate. Post-translationally, cleavage of N-terminal methionine and N-terminal acetylation by NAT1/ARD1.

Its subcellular location is the cytoplasm. It is found in the nucleus. The catalysed reaction is pyruvate + H(+) = acetaldehyde + CO2. The enzyme catalyses 3-methyl-2-oxobutanoate + H(+) = 2-methylpropanal + CO2. It catalyses the reaction (S)-3-methyl-2-oxopentanoate + H(+) = 2-methylbutanal + CO2. It carries out the reaction indole-3-pyruvate + H(+) = indole-3-acetaldehyde + CO2. The catalysed reaction is 3-phenylpyruvate + H(+) = 2-phenylacetaldehyde + CO2. The enzyme catalyses 2-oxobutanoate + H(+) = propanal + CO2. It catalyses the reaction 2-oxopentanoate + H(+) = butanal + CO2. It carries out the reaction 2 acetaldehyde = acetoin. The catalysed reaction is acetaldehyde + pyruvate + H(+) = acetoin + CO2. It participates in fermentation; ethanol fermentation. Its pathway is amino-acid degradation; Ehrlich pathway. With respect to regulation, allosterically activated by its substrate, pyruvate. In terms of biological role, major of three pyruvate decarboxylases (PDC1, PDC5, PDC6) implicated in the nonoxidative conversion of pyruvate to acetaldehyde and carbon dioxide during alcoholic fermentation. Most of the produced acetaldehyde is subsequently reduced to ethanol, but some is required for cytosolic acetyl-CoA production for biosynthetic pathways. The enzyme is also one of five 2-oxo acid decarboxylases (PDC1, PDC5, PDC6, ARO10, and THI3) able to decarboxylate more complex 2-oxo acids (alpha-ketoacids) than pyruvate, which seem mainly involved in amino acid catabolism. Here the enzyme catalyzes the decarboxylation of amino acids, which, in a first step, have been transaminated to the corresponding 2-oxo acids. In a third step, the resulting aldehydes are reduced to alcohols, collectively referred to as fusel oils or alcohols. Its preferred substrates are the transaminated amino acids derived from threonine (2-oxobutanoate), norvaline (2-oxopentanoate), valine (3-methyl-2-oxobutanoate, also alpha-keto-isovalerate), isoleucine ((3S)-3-methyl-2-oxopentanoate, also alpha-keto-beta-methylvalerate), phenylalanine (phenylpyruvate), and tryptophan (3-(indol-3-yl)pyruvate), whereas transaminated leucine is no substrate. In a side-reaction the carbanionic intermediate (or active aldehyde) generated by decarboxylation or by activation of an aldehyde can react with an aldehyde via condensation (or carboligation) yielding a 2-hydroxy ketone, collectively called acyloins. The chain is Pyruvate decarboxylase isozyme 1 from Saccharomyces cerevisiae (strain ATCC 204508 / S288c) (Baker's yeast).